The chain runs to 958 residues: Glucoamylase 1 (958 aa).

The N-terminal stretch at 1–22 (MIFLKLIKSIVIGLGLVSAIQA) is a signal peptide. N-linked (GlcNAc...) asparagine glycans are attached at residues asparagine 61, asparagine 78, asparagine 107, asparagine 197, asparagine 403, and asparagine 416. Catalysis depends on residues aspartate 470 and glutamate 473. Residues asparagine 513, asparagine 580, and asparagine 602 are each glycosylated (N-linked (GlcNAc...) asparagine). The active-site Proton donor is aspartate 638. Residues asparagine 813 and asparagine 907 are each glycosylated (N-linked (GlcNAc...) asparagine).

This sequence belongs to the glycosyl hydrolase 31 family.

It catalyses the reaction Hydrolysis of terminal (1-&gt;4)-linked alpha-D-glucose residues successively from non-reducing ends of the chains with release of beta-D-glucose.. Functionally, this glucoamylase has a specificity toward both alpha-1,4 and alpha-1,6 linkages. The protein is Glucoamylase 1 (GAM1) of Schwanniomyces occidentalis (Yeast).